Consider the following 190-residue polypeptide: Elongation factor P-like protein (190 aa).

The protein belongs to the elongation factor P family.

This chain is Elongation factor P-like protein, found in Edwardsiella ictaluri (strain 93-146).